A 651-amino-acid chain; its full sequence is Acetyl-coenzyme A synthetase (651 aa).

Residues 189–192, threonine 311, and asparagine 335 contribute to the CoA site; that span reads RGGK. ATP is bound by residues 387–389, 411–416, aspartate 500, and arginine 515; these read GEP and DTWWQT. Serine 523 contacts CoA. Residue arginine 526 participates in ATP binding. Residues valine 537, histidine 539, and valine 542 each coordinate Mg(2+). Arginine 586 is a binding site for CoA. The residue at position 611 (lysine 611) is an N6-acetyllysine.

It belongs to the ATP-dependent AMP-binding enzyme family. Mg(2+) is required as a cofactor. Post-translationally, acetylated. Deacetylation by the SIR2-homolog deacetylase activates the enzyme.

The enzyme catalyses acetate + ATP + CoA = acetyl-CoA + AMP + diphosphate. Its function is as follows. Catalyzes the conversion of acetate into acetyl-CoA (AcCoA), an essential intermediate at the junction of anabolic and catabolic pathways. AcsA undergoes a two-step reaction. In the first half reaction, AcsA combines acetate with ATP to form acetyl-adenylate (AcAMP) intermediate. In the second half reaction, it can then transfer the acetyl group from AcAMP to the sulfhydryl group of CoA, forming the product AcCoA. The protein is Acetyl-coenzyme A synthetase of Brucella abortus (strain S19).